The chain runs to 360 residues: Peptide chain release factor 1 (360 aa).

Glutamine 236 is subject to N5-methylglutamine. The tract at residues 288–308 (QDEQDAERKSTIGTGDRSERI) is disordered. The span at 293–308 (AERKSTIGTGDRSERI) shows a compositional bias: basic and acidic residues.

It belongs to the prokaryotic/mitochondrial release factor family. Methylated by PrmC. Methylation increases the termination efficiency of RF1.

The protein localises to the cytoplasm. Its function is as follows. Peptide chain release factor 1 directs the termination of translation in response to the peptide chain termination codons UAG and UAA. The polypeptide is Peptide chain release factor 1 (Streptococcus equi subsp. zooepidemicus (strain H70)).